A 139-amino-acid chain; its full sequence is MGRTIRFGVSLDSELLDKFDVLCDERCYQTRSEAIRDLIRNTLVQQEWEDTDREIAGTLTLVYDHHKSDLAQRLTEIQHDVHDIIITSLHVHLDHYNCLEVLVLKGPGQQVRNLAQRLISTKGVKHGKLSLTTTGQDLT.

Ni(2+) is bound by residues His-79, His-90, His-92, and Cys-98.

It belongs to the transcriptional regulatory CopG/NikR family. It depends on Ni(2+) as a cofactor.

Its function is as follows. Transcriptional regulator. The polypeptide is Putative nickel-responsive regulator (Nitratidesulfovibrio vulgaris (strain ATCC 29579 / DSM 644 / CCUG 34227 / NCIMB 8303 / VKM B-1760 / Hildenborough) (Desulfovibrio vulgaris)).